The chain runs to 192 residues: Virion infectivity factor (192 aa).

The tract at residues 14 to 17 is interaction with host APOBEC3F; F1-box; sequence DRMR. Residues 40–44 are interaction with host APOBEC3G; G-box; sequence YRHHY. Residues 54-72 are interaction with host APOBEC3F and APOBEC3G; FG-box; sequence EVHIPLGEARLVVTTYWGL. The interaction with host APOBEC3F; F2-box stretch occupies residues 74 to 79; that stretch reads TGEKEW. The interval 75–114 is RNA-binding; the sequence is GEKEWHLGQGVSIEWRKRRYSTQVDPGLADQLIHMYYFDC. Threonine 96 carries the phosphothreonine; by host MAP4K1 modification. Histidine 108, cysteine 114, cysteine 133, and histidine 139 together coordinate Zn(2+). The short motif at 108-139 is the HCCH motif element; that stretch reads HMYYFDCFAESAIRKAILGHIVSPSCEYQAGH. Serine 144 bears the Phosphoserine; by host mark. Residues 144–153 carry the BC-box-like motif motif; it reads SLQYLALAAL. Positions 151-164 are multimerization; the sequence is AALIAPKKIKPPLP. The SOCS box-like stretch occupies residues 151–180; it reads AALIAPKKIKPPLPSVRKLTEDRWNKPQKT. Serine 165 carries the phosphoserine; by host MAP4K1 modification. Residues 165–192 form a disordered region; that stretch reads SVRKLTEDRWNKPQKTKGRRGSHTMNGH. The interval 171-172 is membrane association; that stretch reads ED. The span at 176–186 shows a compositional bias: basic residues; it reads KPQKTKGRRGS. Threonine 188 carries the phosphothreonine; by host modification.

This sequence belongs to the primate lentivirus group Vif protein family. In terms of assembly, homomultimer; in vitro and presumably in vivo. Interacts with viral RNA and Pr55Gag precursor; these interactions mediate Vif incorporation into the virion. Interacts with the viral reverse transcriptase. Forms cullin-5-RING E3 ubiquitin-protein ligase complex (ECS complex) by interacting with host CUL5, RBX2, elongin BC complex (ELOB and ELOC) and CBFB/CBF-beta. Within the ECS complex, Vif interacts directly with host CUL5, ELOC and APOBEC (APOBEC3F and APOBEC3G) substrates. The ECS complex also contains some single-stranded RNA (ssRNA) that acts as a glue that bridges Vif with APOBEC (APOBEC3F and APOBEC3G) substrates. Interacts with host UBCE7IP1 isoform 3/ZIN and possibly with SAT. Interacts with host tyrosine kinases HCK and FYN; these interactions may decrease level of phosphorylated APOBEC3G incorporation into virions. Interacts with host ABCE1; this interaction may play a role in protecting viral RNA from damage during viral assembly. Interacts with host MDM2; this interaction targets Vif for degradation by the proteasome. Processed in virion by the viral protease. Post-translationally, highly phosphorylated on serine and threonine residues. In terms of processing, polyubiquitinated and degraded by the proteasome in the presence of APOBEC3G.

It localises to the host cytoplasm. The protein resides in the host cell membrane. It is found in the virion. In terms of biological role, counteracts the innate antiviral activity of host APOBEC3F and APOBEC3G by promoting their ubiquitination and degradation. Acts as a substrate recognition component of an E3 ubiquitin-protein ligase complex: mechanistically, Vif hijacks a host cullin-5-RING E3 ubiquitin-protein ligase complex (ECS complex) and the transcription coactivator CBFB/CBF-beta to form an active E3 ubiquitin-protein ligase complex that targets APOBEC3G and APOBEC3F for polyubiquitination, leading to their degradation by the proteasome. Vif interaction with APOBEC3G also blocks its cytidine deaminase activity in a proteasome-independent manner, suggesting a dual inhibitory mechanism. May interact directly with APOBEC3G mRNA in order to inhibit its translation. Association with CBFB/CBF-beta also inhibits the transcription coactivator activity of CBFB/CBF-beta. Seems to play a role in viral morphology by affecting the stability of the viral nucleoprotein core. Finally, Vif also contributes to the G2 cell cycle arrest observed in HIV infected cells. The polypeptide is Virion infectivity factor (Human immunodeficiency virus type 1 group M subtype D (isolate NDK) (HIV-1)).